Reading from the N-terminus, the 571-residue chain is Proline--tRNA ligase (571 aa).

This sequence belongs to the class-II aminoacyl-tRNA synthetase family. ProS type 1 subfamily. In terms of assembly, homodimer.

The protein localises to the cytoplasm. It carries out the reaction tRNA(Pro) + L-proline + ATP = L-prolyl-tRNA(Pro) + AMP + diphosphate. Functionally, catalyzes the attachment of proline to tRNA(Pro) in a two-step reaction: proline is first activated by ATP to form Pro-AMP and then transferred to the acceptor end of tRNA(Pro). As ProRS can inadvertently accommodate and process non-cognate amino acids such as alanine and cysteine, to avoid such errors it has two additional distinct editing activities against alanine. One activity is designated as 'pretransfer' editing and involves the tRNA(Pro)-independent hydrolysis of activated Ala-AMP. The other activity is designated 'posttransfer' editing and involves deacylation of mischarged Ala-tRNA(Pro). The misacylated Cys-tRNA(Pro) is not edited by ProRS. This Pseudomonas aeruginosa (strain UCBPP-PA14) protein is Proline--tRNA ligase.